A 190-amino-acid polypeptide reads, in one-letter code: Probable DNA replication complex GINS protein PSF2 (190 aa).

The protein belongs to the GINS2/PSF2 family. In terms of assembly, component of the GINS complex which is a heterotetramer of gins1, gins2, gins3 and gins4.

Its subcellular location is the nucleus. The GINS complex plays an essential role in the initiation of DNA replication. This chain is Probable DNA replication complex GINS protein PSF2, found in Brugia malayi (Filarial nematode worm).